The sequence spans 461 residues: tRNA modification GTPase MnmE (461 aa).

(6S)-5-formyl-5,6,7,8-tetrahydrofolate-binding residues include Arg23, Glu88, and Arg127. Positions 223–382 (GLNTVIVGKP…VEEALVEIVY (160 aa)) constitute a TrmE-type G domain. Residue Asn233 coordinates K(+). GTP-binding positions include 233 to 238 (NVGKSS), 252 to 258 (TEVPGTT), and 277 to 280 (DTAG). Ser237 is a binding site for Mg(2+). Thr252, Val254, and Thr257 together coordinate K(+). Thr258 contributes to the Mg(2+) binding site. Residue Lys461 participates in (6S)-5-formyl-5,6,7,8-tetrahydrofolate binding.

This sequence belongs to the TRAFAC class TrmE-Era-EngA-EngB-Septin-like GTPase superfamily. TrmE GTPase family. As to quaternary structure, homodimer. Heterotetramer of two MnmE and two MnmG subunits. It depends on K(+) as a cofactor.

It is found in the cytoplasm. Functionally, exhibits a very high intrinsic GTPase hydrolysis rate. Involved in the addition of a carboxymethylaminomethyl (cmnm) group at the wobble position (U34) of certain tRNAs, forming tRNA-cmnm(5)s(2)U34. The polypeptide is tRNA modification GTPase MnmE (Alkaliphilus metalliredigens (strain QYMF)).